The chain runs to 350 residues: Probable poly-beta-1,6-N-acetyl-D-glucosamine export protein (350 aa).

10 helical membrane-spanning segments follow: residues 7-29, 44-66, 79-101, 116-138, 145-167, 187-204, 211-233, 243-262, 269-291, and 306-328; these read ELVYLRAIICAIIIVTHLLTQIT, FYIRNIVIFGTPCFIILSQLLTT, TRVKYILIPYILMGLFYSYSESL, LLGQWYGYFIVVIMQFFILSYII, LFNSKILLLLSFILQQSFLYYFT, IIFGWIFYFFLGAYMGYN, FLERYLVIMIVLAVATYFVFIAL, SFSYSLTPYNSIMFIVILGI, MLFNTIQMISAFSFFIYLLHPII, and TMVFLAISLLFILGLCIGVGMIL.

It belongs to the acyltransferase 3 family.

It localises to the cell membrane. Presumably involved in the export of the biofilm adhesin polysaccharide poly-beta-1,6-N-acetyl-D-glucosamine (PNAG, also referred to as PIA) across the cell membrane. The polypeptide is Probable poly-beta-1,6-N-acetyl-D-glucosamine export protein (icaC) (Staphylococcus aureus (strain MRSA252)).